Consider the following 834-residue polypeptide: Translation initiation factor IF-2 (834 aa).

A disordered region spans residues 1–247; sequence MTEEKKFSGS…STPATVRKEQ (247 aa). Low complexity predominate over residues 45–101; that stretch reads GGSRPSRPARPNNNNQNRPNNGGQSQNRNNQNRSNTSTGGQNRSNNGGNRNNRPGSR. A compositionally biased stretch (basic and acidic residues) spans 109–125; the sequence is PMIREKKNWSTKPREGQ. Low complexity-rich tracts occupy residues 149 to 165 and 173 to 201; these read ASAA…ATKP and ATKP…SARN. The span at 224–233 shows a compositional bias: basic residues; the sequence is GSKKSRRIAA. Residues 335-504 enclose the tr-type G domain; sequence SRPPVVTIMG…LLQAEVLELK (170 aa). The segment at 344–351 is G1; the sequence is GHVDHGKT. A GTP-binding site is contributed by 344–351; that stretch reads GHVDHGKT. Positions 369-373 are G2; the sequence is GITQH. The tract at residues 390 to 393 is G3; it reads DTPG. GTP is bound by residues 390 to 394 and 444 to 447; these read DTPGH and NKID. Positions 444 to 447 are G4; that stretch reads NKID. Residues 480–482 are G5; sequence SAK.

This sequence belongs to the TRAFAC class translation factor GTPase superfamily. Classic translation factor GTPase family. IF-2 subfamily.

The protein localises to the cytoplasm. In terms of biological role, one of the essential components for the initiation of protein synthesis. Protects formylmethionyl-tRNA from spontaneous hydrolysis and promotes its binding to the 30S ribosomal subunits. Also involved in the hydrolysis of GTP during the formation of the 70S ribosomal complex. The sequence is that of Translation initiation factor IF-2 from Leuconostoc mesenteroides subsp. mesenteroides (strain ATCC 8293 / DSM 20343 / BCRC 11652 / CCM 1803 / JCM 6124 / NCDO 523 / NBRC 100496 / NCIMB 8023 / NCTC 12954 / NRRL B-1118 / 37Y).